Reading from the N-terminus, the 540-residue chain is Cytochrome bc1 complex cytochrome b subunit (540 aa).

A helical transmembrane segment spans residues 40-60; sequence EIALYSFIILLLTGVYLTLFF. Heme contacts are provided by His-105 and His-119. 3 consecutive transmembrane segments (helical) span residues 109-129, 137-157, and 169-189; these read ALTF…TGAF, WIIG…GYSL, and IMSA…WLIF. Positions 206 and 221 each coordinate heme. The next 5 helical transmembrane spans lie at 207-227, 259-279, 325-345, 371-391, and 408-428; these read VLII…LVWY, FGLV…INAI, AFWV…YPFI, LGVM…NDLF, and IGLI…CLGL.

This sequence belongs to the cytochrome b family. In terms of assembly, the cytochrome bc1 complex is composed of a cytochrome b (QcrB), the Rieske protein iron-sulfur (QcrA) and a diheme cytochrome c (QcrC) subunit. Heme serves as cofactor.

The protein resides in the cell membrane. It catalyses the reaction a quinol + 2 Fe(III)-[cytochrome c](out) = a quinone + 2 Fe(II)-[cytochrome c](out) + 2 H(+)(out). Functionally, cytochrome b subunit of the cytochrome bc1 complex, an essential component of the respiratory electron transport chain required for ATP synthesis. The bc1 complex catalyzes the oxidation of menaquinol and the reduction of cytochrome c in the respiratory chain. The bc1 complex operates through a Q-cycle mechanism that couples electron transfer to generation of the proton gradient that drives ATP synthesis. The protein is Cytochrome bc1 complex cytochrome b subunit (qcrB) of Corynebacterium diphtheriae (strain ATCC 700971 / NCTC 13129 / Biotype gravis).